A 188-amino-acid polypeptide reads, in one-letter code: Large ribosomal subunit protein eL18 (188 aa).

A disordered region spans residues 147-188; that stretch reads EANKHFGPAPGVPHSHTKAHVRSKGRQFERARGRRTSKGYKK. Basic residues-rich tracts occupy residues 161–171 and 178–188; these read SHTKAHVRSKG and RGRRTSKGYKK.

It belongs to the eukaryotic ribosomal protein eL18 family.

It localises to the cytoplasm. This Diaphorina citri (Asian citrus psyllid) protein is Large ribosomal subunit protein eL18 (RpL18).